The chain runs to 330 residues: Virulence plasmid integrase pGP8-D (330 aa).

One can recognise a Core-binding (CB) domain in the interval 39-124 (FSLFEVIMHW…SYISLTRFLN (86 aa)). The Tyr recombinase domain maps to 152-327 (VKTDAMNSLQ…SREDNASKKM (176 aa)). Active-site residues include R189, K214, H279, R282, and H305. The O-(3'-phospho-DNA)-tyrosine intermediate role is filled by Y314.

The protein belongs to the 'phage' integrase family.

In Chlamydia trachomatis serovar L2 (strain ATCC VR-902B / DSM 19102 / 434/Bu), this protein is Virulence plasmid integrase pGP8-D.